A 262-amino-acid polypeptide reads, in one-letter code: Ribosomal RNA small subunit methyltransferase A (262 aa).

6 residues coordinate S-adenosyl-L-methionine: N13, L15, G40, E61, D85, and N104.

The protein belongs to the class I-like SAM-binding methyltransferase superfamily. rRNA adenine N(6)-methyltransferase family. RsmA subfamily.

It localises to the cytoplasm. The catalysed reaction is adenosine(1518)/adenosine(1519) in 16S rRNA + 4 S-adenosyl-L-methionine = N(6)-dimethyladenosine(1518)/N(6)-dimethyladenosine(1519) in 16S rRNA + 4 S-adenosyl-L-homocysteine + 4 H(+). Functionally, specifically dimethylates two adjacent adenosines (A1518 and A1519) in the loop of a conserved hairpin near the 3'-end of 16S rRNA in the 30S particle. May play a critical role in biogenesis of 30S subunits. This Chromobacterium violaceum (strain ATCC 12472 / DSM 30191 / JCM 1249 / CCUG 213 / NBRC 12614 / NCIMB 9131 / NCTC 9757 / MK) protein is Ribosomal RNA small subunit methyltransferase A.